A 176-amino-acid polypeptide reads, in one-letter code: Interleukin-7 (176 aa).

The signal sequence occupies residues 1–25 (MFHVSFRYIFGIPPLILVLLPVASS). Disulfide bonds link cysteine 27–cysteine 165, cysteine 58–cysteine 153, and cysteine 71–cysteine 116. Asparagine 94, asparagine 115, and asparagine 140 each carry an N-linked (GlcNAc...) asparagine glycan.

This sequence belongs to the IL-7/IL-9 family.

The protein localises to the secreted. In terms of biological role, hematopoietic growth factor capable of stimulating the proliferation of lymphoid progenitors. It is important for proliferation during certain stages of B-cell maturation. This is Interleukin-7 (IL7) from Sus scrofa (Pig).